The primary structure comprises 382 residues: DNA double-strand break repair protein Mre11 (382 aa).

The Mn(2+) site is built by Asp8, His10, Asp49, and Asp84. The active-site Proton donor is the His85. Residues His156, His187, and His189 each contribute to the Mn(2+) site.

Belongs to the MRE11/RAD32 family. Homodimer. Forms a heterotetramer composed of two Mre11 subunits and two Rad50 subunits. Interacts with Rad50 and HerA. Mn(2+) serves as cofactor.

Its activity is regulated as follows. Nuclease activity is regulated by Rad50. Functionally, part of the Rad50/Mre11 complex, which is involved in the early steps of DNA double-strand break (DSB) repair. The complex may facilitate opening of the processed DNA ends to aid in the recruitment of HerA and NurA. Mre11 binds to DSB ends and has both double-stranded 3'-5' exonuclease activity and single-stranded endonuclease activity. Recruited immediately to chromosomal DNA after gamma irradiation, and remains DNA bound in the course of DNA repair. The sequence is that of DNA double-strand break repair protein Mre11 from Sulfolobus acidocaldarius (strain ATCC 33909 / DSM 639 / JCM 8929 / NBRC 15157 / NCIMB 11770).